We begin with the raw amino-acid sequence, 532 residues long: Phosphoenolpyruvate carboxykinase (ATP) (532 aa).

Substrate is bound by residues Arg-60, Tyr-200, and Lys-206. Residues Lys-206, His-225, and 242–250 (GLSGTGKTT) each bind ATP. Mn(2+) contacts are provided by Lys-206 and His-225. Ser-244 lines the substrate pocket. A Mn(2+)-binding site is contributed by Asp-263. ATP contacts are provided by residues Glu-291, Arg-327, 443-444 (RI), and Thr-449. Arg-327 contributes to the substrate binding site.

Belongs to the phosphoenolpyruvate carboxykinase (ATP) family. Monomer. Mn(2+) is required as a cofactor.

Its subcellular location is the cytoplasm. It carries out the reaction oxaloacetate + ATP = phosphoenolpyruvate + ADP + CO2. It functions in the pathway carbohydrate biosynthesis; gluconeogenesis. Its activity is regulated as follows. Inhibited by p-chloromercuribenzoate. In terms of biological role, involved in gluconeogenesis. Catalyzes the conversion of oxaloacetate (OAA) to phosphoenolpyruvate (PEP) through direct phosphoryl transfer between the nucleoside triphosphate and OAA. This is Phosphoenolpyruvate carboxykinase (ATP) from Anaerobiospirillum succiniciproducens.